The sequence spans 448 residues: UDP-glucose 6-dehydrogenase (448 aa).

Residues 2–19, valine 11, aspartate 30, lysine 35, threonine 121, and glutamate 152 contribute to the NAD(+) site; that span reads NITFIGSGYVGLVSGIIM. Residues 148 to 152, lysine 204, asparagine 208, 249 to 253, and glycine 257 contribute to the substrate site; these read EFLRE and FLNAG. The active-site Nucleophile is the cysteine 260. Lysine 263 is a binding site for NAD(+). Lysine 321 contacts substrate. Arginine 328 serves as a coordination point for NAD(+).

Belongs to the UDP-glucose/GDP-mannose dehydrogenase family.

It carries out the reaction UDP-alpha-D-glucose + 2 NAD(+) + H2O = UDP-alpha-D-glucuronate + 2 NADH + 3 H(+). The protein operates within nucleotide-sugar biosynthesis; UDP-alpha-D-glucuronate biosynthesis; UDP-alpha-D-glucuronate from UDP-alpha-D-glucose: step 1/1. This is UDP-glucose 6-dehydrogenase (udg) from Rickettsia felis (strain ATCC VR-1525 / URRWXCal2) (Rickettsia azadi).